The chain runs to 31 residues: Cytochrome b6-f complex subunit 6 (31 aa).

A helical membrane pass occupies residues 4–26; it reads ITSYFGFLLAASTITPALLIGLS.

This sequence belongs to the PetL family. As to quaternary structure, the 4 large subunits of the cytochrome b6-f complex are cytochrome b6, subunit IV (17 kDa polypeptide, PetD), cytochrome f and the Rieske protein, while the 4 small subunits are PetG, PetL, PetM and PetN. The complex functions as a dimer.

It localises to the plastid. The protein resides in the chloroplast thylakoid membrane. Functionally, component of the cytochrome b6-f complex, which mediates electron transfer between photosystem II (PSII) and photosystem I (PSI), cyclic electron flow around PSI, and state transitions. PetL is important for photoautotrophic growth as well as for electron transfer efficiency and stability of the cytochrome b6-f complex. The chain is Cytochrome b6-f complex subunit 6 from Illicium oligandrum (Star anise).